We begin with the raw amino-acid sequence, 1165 residues long: DNA-directed RNA polymerase subunit beta' (1165 aa).

Zn(2+)-binding residues include Cys-60, Cys-62, Cys-75, and Cys-78. 3 residues coordinate Mg(2+): Asp-449, Asp-451, and Asp-453. Residues Cys-794, Cys-868, Cys-875, and Cys-878 each coordinate Zn(2+).

It belongs to the RNA polymerase beta' chain family. As to quaternary structure, the RNAP catalytic core consists of 2 alpha, 1 beta, 1 beta' and 1 omega subunit. When a sigma factor is associated with the core the holoenzyme is formed, which can initiate transcription. The cofactor is Mg(2+). Zn(2+) serves as cofactor.

It catalyses the reaction RNA(n) + a ribonucleoside 5'-triphosphate = RNA(n+1) + diphosphate. Its function is as follows. DNA-dependent RNA polymerase catalyzes the transcription of DNA into RNA using the four ribonucleoside triphosphates as substrates. The sequence is that of DNA-directed RNA polymerase subunit beta' from Acetivibrio thermocellus (strain ATCC 27405 / DSM 1237 / JCM 9322 / NBRC 103400 / NCIMB 10682 / NRRL B-4536 / VPI 7372) (Clostridium thermocellum).